Here is a 314-residue protein sequence, read N- to C-terminus: RNA 2',3'-cyclic phosphodiesterase (314 aa).

Residue histidine 43 is the Proton donor of the active site. 2 short sequence motifs (HXTX) span residues histidine 43–leucine 46 and histidine 129–isoleucine 132. Histidine 129 functions as the Proton acceptor in the catalytic mechanism.

This sequence belongs to the 2H phosphoesterase superfamily. ThpR family.

It carries out the reaction a 3'-end 2',3'-cyclophospho-ribonucleotide-RNA + H2O = a 3'-end 2'-phospho-ribonucleotide-RNA + H(+). Functionally, hydrolyzes RNA 2',3'-cyclic phosphodiester to an RNA 2'-phosphomonoester. This is RNA 2',3'-cyclic phosphodiesterase from Geobacillus stearothermophilus (Bacillus stearothermophilus).